Here is a 614-residue protein sequence, read N- to C-terminus: Pyruvate decarboxylase 2 (614 aa).

Substrate-binding residues include aspartate 50 and histidine 137. The interval aspartate 415–isoleucine 523 is thiamine pyrophosphate binding. 3 residues coordinate Mg(2+): aspartate 491, asparagine 518, and glycine 520. Glutamate 524 contributes to the substrate binding site.

It belongs to the TPP enzyme family. Homotetramer. A metal cation is required as a cofactor. Thiamine diphosphate serves as cofactor. Pollen.

It carries out the reaction a 2-oxocarboxylate + H(+) = an aldehyde + CO2. The sequence is that of Pyruvate decarboxylase 2 (PDC2) from Nicotiana tabacum (Common tobacco).